Here is a 300-residue protein sequence, read N- to C-terminus: Acetylglutamate kinase (300 aa).

Residues 72 to 73 (GG), Arg-94, and Asn-197 contribute to the substrate site.

It belongs to the acetylglutamate kinase family. ArgB subfamily.

It is found in the cytoplasm. It carries out the reaction N-acetyl-L-glutamate + ATP = N-acetyl-L-glutamyl 5-phosphate + ADP. Its pathway is amino-acid biosynthesis; L-arginine biosynthesis; N(2)-acetyl-L-ornithine from L-glutamate: step 2/4. In terms of biological role, catalyzes the ATP-dependent phosphorylation of N-acetyl-L-glutamate. This chain is Acetylglutamate kinase, found in Aromatoleum aromaticum (strain DSM 19018 / LMG 30748 / EbN1) (Azoarcus sp. (strain EbN1)).